The following is a 217-amino-acid chain: MIRNELIDQLARTQASALETQGLGLVPMVVEQSGRGERAYDIYSRLLKERVIFMVGEVNDQTANLVVAQLLFLESENPDKDISLYINSPGGSVSAGLAMYDTMQFVKPDVSTLCMGMAASMGAFLLAAGAKGKRYALPNSRIMIHQPLGGARGQASDIEIQAREILYLRERLNTILSEVTGQPVDKIARDTDRDNFMSGDQAKEYGLIDKVLARRGA.

Ser120 serves as the catalytic Nucleophile. His145 is an active-site residue.

The protein belongs to the peptidase S14 family. In terms of assembly, fourteen ClpP subunits assemble into 2 heptameric rings which stack back to back to give a disk-like structure with a central cavity, resembling the structure of eukaryotic proteasomes.

It localises to the cytoplasm. It catalyses the reaction Hydrolysis of proteins to small peptides in the presence of ATP and magnesium. alpha-casein is the usual test substrate. In the absence of ATP, only oligopeptides shorter than five residues are hydrolyzed (such as succinyl-Leu-Tyr-|-NHMec, and Leu-Tyr-Leu-|-Tyr-Trp, in which cleavage of the -Tyr-|-Leu- and -Tyr-|-Trp bonds also occurs).. Functionally, cleaves peptides in various proteins in a process that requires ATP hydrolysis. Has a chymotrypsin-like activity. Plays a major role in the degradation of misfolded proteins. The sequence is that of ATP-dependent Clp protease proteolytic subunit from Ralstonia nicotianae (strain ATCC BAA-1114 / GMI1000) (Ralstonia solanacearum).